We begin with the raw amino-acid sequence, 485 residues long: Probable cobyric acid synthase (485 aa).

The region spanning 250–435 (EVEIAVIRLP…LHGLFDNENI (186 aa)) is the GATase cobBQ-type domain. The active-site Nucleophile is Cys-328. His-427 is an active-site residue.

Belongs to the CobB/CobQ family. CobQ subfamily.

Its pathway is cofactor biosynthesis; adenosylcobalamin biosynthesis. In terms of biological role, catalyzes amidations at positions B, D, E, and G on adenosylcobyrinic A,C-diamide. NH(2) groups are provided by glutamine, and one molecule of ATP is hydrogenolyzed for each amidation. In Methanosarcina acetivorans (strain ATCC 35395 / DSM 2834 / JCM 12185 / C2A), this protein is Probable cobyric acid synthase.